Here is a 37-residue protein sequence, read N- to C-terminus: MKKRASVRKICDKCRLIRRGGRILVICSNPRHKQGQG.

The protein belongs to the bacterial ribosomal protein bL36 family.

It localises to the plastid. This chain is Large ribosomal subunit protein bL36c, found in Cuscuta gronovii (Common dodder).